Here is a 431-residue protein sequence, read N- to C-terminus: Glutamate-1-semialdehyde 2,1-aminomutase (431 aa).

N6-(pyridoxal phosphate)lysine is present on Lys265.

It belongs to the class-III pyridoxal-phosphate-dependent aminotransferase family. HemL subfamily. In terms of assembly, homodimer. It depends on pyridoxal 5'-phosphate as a cofactor.

The protein localises to the cytoplasm. The catalysed reaction is (S)-4-amino-5-oxopentanoate = 5-aminolevulinate. The protein operates within porphyrin-containing compound metabolism; protoporphyrin-IX biosynthesis; 5-aminolevulinate from L-glutamyl-tRNA(Glu): step 2/2. The sequence is that of Glutamate-1-semialdehyde 2,1-aminomutase from Vibrio vulnificus (strain CMCP6).